The following is an 84-amino-acid chain: MNYLVMISFALLLMTGVESVRDAYIAKPHNCVYECARNEYCNDLCTKNGAKSGYCQWVGKYGNGCWCKELPDNVPIRVPGKCHR.

The N-terminal stretch at 1–19 is a signal peptide; that stretch reads MNYLVMISFALLLMTGVES. In terms of domain architecture, LCN-type CS-alpha/beta spans 21–83; it reads RDAYIAKPHN…VPIRVPGKCH (63 aa). 4 disulfides stabilise this stretch: Cys-31-Cys-82, Cys-35-Cys-55, Cys-41-Cys-65, and Cys-45-Cys-67. Arg-84 is a propeptide (removed by a carboxypeptidase).

The protein belongs to the long (4 C-C) scorpion toxin superfamily. Sodium channel inhibitor family. Alpha subfamily. Expressed by the venom gland.

It localises to the secreted. Functionally, alpha toxins bind voltage-independently at site-3 of sodium channels (Nav) and inhibit the inactivation of the activated channels, thereby blocking neuronal transmission. The sequence is that of Toxin BmKaTx16 from Olivierus martensii (Manchurian scorpion).